The following is an 800-amino-acid chain: Elongation factor G, mitochondrial (800 aa).

Residues 1–59 (MRVIRAVATLHAGRAAAVRQGVRSVSLGACRAAVETPSLRSAGSQFESRRLFSRSSYLR) constitute a mitochondrion transit peptide. One can recognise a tr-type G domain in the interval 99–385 (ARVRNIGIAA…AVCDYLPNPN (287 aa)). GTP contacts are provided by residues 108–115 (AHIDSGKT), 183–187 (DTPGH), and 237–240 (NKMD).

It belongs to the TRAFAC class translation factor GTPase superfamily. Classic translation factor GTPase family. EF-G/EF-2 subfamily.

Its subcellular location is the mitochondrion. It functions in the pathway protein biosynthesis; polypeptide chain elongation. In terms of biological role, mitochondrial GTPase that catalyzes the GTP-dependent ribosomal translocation step during translation elongation. During this step, the ribosome changes from the pre-translocational (PRE) to the post-translocational (POST) state as the newly formed A-site-bound peptidyl-tRNA and P-site-bound deacylated tRNA move to the P and E sites, respectively. Catalyzes the coordinated movement of the two tRNA molecules, the mRNA and conformational changes in the ribosome. The chain is Elongation factor G, mitochondrial (mef1) from Neurospora crassa (strain ATCC 24698 / 74-OR23-1A / CBS 708.71 / DSM 1257 / FGSC 987).